Here is a 2843-residue protein sequence, read N- to C-terminus: Adenomatous polyposis coli protein (2843 aa).

Residue A2 is modified to N-acetylalanine. The stretch at 2 to 61 forms a coiled coil; the sequence is AAASYDQLLKQVEALKMENSNLRQELEDNSNHLTKLETEASNMKEVLKQLQGSIEDEAMA. A phosphoserine mark is found at S107 and S111. Residues 127–248 are a coiled coil; it reads SRESTGYLEE…ATEAERSSQN (122 aa). Residues 239–305 are disordered; it reads ATEAERSSQN…STHSAPRRLT (67 aa). A compositionally biased stretch (basic and acidic residues) spans 241-261; it reads EAERSSQNKHETGSHDAERQN. Polar residues predominate over residues 271–282; that stretch reads MATSGNGQGSTT. Positions 290–299 are enriched in low complexity; it reads SVLSSSSTHS. 7 ARM repeats span residues 453–495, 505–547, 548–591, 592–638, 639–683, 684–725, and 726–767; these read LMKL…HYSI, LTNL…IASV, LRNL…VLSA, LWNL…GGGI, LRNV…ACGT, LWNL…SAAA, and LRNL…LDAQ. Phosphoserine occurs at positions 744, 748, and 780. Positions 828 to 878 are disordered; that stretch reads TTVLPSSSSSRGSLDSSRSEKDRSLERERGIGLGNYHPATENPGTSSKRGL. Residues 833-843 are compositionally biased toward low complexity; sequence SSSSSRGSLDS. Positions 844 to 857 are enriched in basic and acidic residues; sequence SRSEKDRSLERERG. Residues 869–878 show a composition bias toward polar residues; the sequence is NPGTSSKRGL. S908 is modified (phosphoserine). 2 disordered regions span residues 923–943 and 958–987; these read RRSS…SENS and RSSN…ESYS. Residues 927-943 are compositionally biased toward polar residues; it reads AAHTHSNTYNFTKSENS. The tract at residues 960–1337 is responsible for down-regulation through a process mediated by direct ubiquitination; the sequence is SNDSLNSVSS…QHPRTKSSRL (378 aa). Positions 961-971 are enriched in low complexity; the sequence is NDSLNSVSSSD. 3 positions are modified to phosphoserine: S987, S1038, and S1042. Residues 1020–1169 form an interaction with catenins region; the sequence is ELDTPINYSL…TNYSIKYNEE (150 aa). Disordered regions lie at residues 1099–1169, 1190–1244, and 1311–1376; these read VSPY…YNEE, SQKQ…GQPQ, and IGTR…PEHY. Positions 1107–1130 are enriched in polar residues; it reads ANGSETNRVGSNHGINQNVSQSLC. The span at 1146 to 1159 shows a compositional bias: basic and acidic residues; the sequence is RYSEEEQHEEEERP. Positions 1190-1224 are enriched in low complexity; that stretch reads SQKQSFSFSKSSSGQSSKTEHMSSSSENTSTPSSN. The segment covering 1225-1244 has biased composition (polar residues); sequence AKRQNQLHPSSAQSRSGQPQ. Composition is skewed to low complexity over residues 1335 to 1345 and 1355 to 1366; these read SRLQGSSLSSE and SSGAKSPSKSGA. Phosphoserine is present on residues S1360, S1371, S1385, S1392, and S1395. Disordered regions lie at residues 1403–1475, 1526–1569, 1583–1611, 1664–1717, and 1729–1836; these read SSVQ…VNAA, PPVQ…DSDD, MPTK…KPSQ, SPPN…DDNK, and NSAM…RVRG. The residue at position 1438 (T1438) is a Phosphothreonine. Composition is skewed to basic and acidic residues over residues 1448 to 1466 and 1540 to 1564; these read TKRE…RESG and EQPK…KDLL. S1567 carries the post-translational modification Phosphoserine. A compositionally biased stretch (basic and acidic residues) spans 1683–1698; the sequence is EFEKRDTIPTEGRSTD. Over residues 1735–1744 the composition is skewed to basic residues; it reads GKSHKPFRVK. At S1774 the chain carries Phosphoserine. Basic and acidic residues-rich tracts occupy residues 1785-1794 and 1804-1813; these read YRTRVRKNAD and VFSDNKDSKK. Residues S1861, S1863, and S1864 each carry the phosphoserine modification. The interval 1866-1893 is highly charged; the sequence is DFDDDDVDLSREKAELRKAKENKESEAK. Residues 1881–1896 are compositionally biased toward basic and acidic residues; sequence LRKAKENKESEAKVTS. Disordered regions lie at residues 1881–1950, 1965–2011, and 2043–2072; these read LRKA…TDEK, HNSS…APKS, and ISSA…GGIL. Polar residues-rich tracts occupy residues 1897–1913 and 1928–1938; these read HTEL…TQAI and QKQSTFPQSSK. Basic and acidic residues predominate over residues 1939-1950; the sequence is DIPDRGAATDEK. Phosphoserine occurs at positions 1971 and 1973. A compositionally biased stretch (basic and acidic residues) spans 1979–1991; sequence NNNKENEPIKETE. Residues 2035–2059 are interaction with AXIN1; that stretch reads EDDLLQECISSAMPKKKKPSRLKGD. A phosphoserine mark is found at S2088, S2093, S2125, S2129, S2130, and S2132. Disordered regions lie at residues 2147 to 2635 and 2667 to 2714; these read PFHL…SGAT and NNPR…VPMR. At T2151 the chain carries Phosphothreonine. The tract at residues 2167–2674 is basic region; sequence ILKPGEKSTL…PINNPRSGRS (508 aa). The span at 2169–2187 shows a compositional bias: basic and acidic residues; that stretch reads KPGEKSTLETKKIESESKG. Polar residues-rich tracts occupy residues 2203-2223 and 2257-2271; these read VRSN…NMPS and ASKS…TTSP. Residues S2260, S2270, and S2283 each carry the phosphoserine modification. Polar residues predominate over residues 2286–2331; it reads ARQTSQIGGSSKAPSRSGSRDSTPSRPAQQPLSRPIQSPGRNSISP. The segment covering 2348–2369 has biased composition (low complexity); the sequence is TSSPSTASTKSSGSGKMSYTSP. 2 stretches are compositionally biased toward polar residues: residues 2370–2409 and 2418–2427; these read GRQM…NGNG and RMSSTKSSGS. The span at 2459 to 2477 shows a compositional bias: low complexity; it reads SASFESLSPSSRPASPTRS. A phosphoserine mark is found at S2473 and S2535. The interval 2475–2843 is interaction with DLG1; sequence TRSQAQTPVL…HSGSYLVTSV (369 aa). A compositionally biased stretch (basic and acidic residues) spans 2518–2535; sequence NDGRPAKRHDIARSHSES. Polar residues predominate over residues 2555–2568; that stretch reads SSSLPRVSTWRRTG. A Phosphoserine modification is found at S2569. A compositionally biased stretch (low complexity) spans 2569-2579; that stretch reads SSSSILSASSE. The span at 2580-2592 shows a compositional bias: basic and acidic residues; the sequence is SSEKAKSEDEKHV. Composition is skewed to polar residues over residues 2593–2608, 2620–2635, and 2668–2679; these read NSIS…QVSA, FSPT…SGAT, and NPRSGRSPTGNT. Residues S2671 and S2674 each carry the phosphoserine modification. The interval 2674–2843 is interaction with MAPRE1; it reads SPTGNTPPVI…HSGSYLVTSV (170 aa). T2679 bears the Phosphothreonine mark. S2710 and S2724 each carry phosphoserine. The tract at residues 2729 to 2843 is disordered; it reads DAPDQKGTEI…HSGSYLVTSV (115 aa). Residues 2741–2757 show a composition bias toward polar residues; the sequence is GQNNPVPVSETNESSIV. Residues 2763–2774 show a composition bias toward low complexity; sequence SSSSSSKHSSPS. The segment covering 2784–2812 has biased composition (polar residues); that stretch reads FNYNPSPRKSSADSTSARPSQIPTPVNNN. S2789 carries the post-translational modification Phosphoserine. Positions 2803–2806 match the Microtubule tip localization signal motif; sequence SQIP. A PDZ-binding motif is present at residues 2841 to 2843; sequence TSV.

This sequence belongs to the adenomatous polyposis coli (APC) family. Forms homooligomers. Found in a complex consisting of ARHGEF4, APC and CTNNB1. Found in a complex composed of MACF1, APC, AXIN1, CTNNB1 and GSK3B. The complex composed, at least, of APC, CTNNB1 and GSK3B interacts with JPT1; the interaction requires the inactive form of GSK3B (phosphorylated at 'Ser-9'). Interacts with APC2. Interacts with DLG1 (via PDZ domains) and DLG3 (via PDZ domains). Interacts with alpha- and beta-catenins. Interacts with AXIN1 (via RGS domain). Interacts with ARHGEF4 (via N-terminus). Interacts (via C-terminal residues 2674-2843) with MAPRE1 (via C-terminal residues 206-211); the interaction inhibits association with and bundling of F-actin. Interacts with MAPRE2 and MAPRE3 (via C-terminus). Interacts with DIAPH1; DIAPH1 acts as a scaffold protein for MAPRE1 and APC to stabilize microtubules and promote cell migration. Interacts with DIAPH2. Interacts with SCRIB; may mediate APC targeting to adherens junctions of epithelial cells. Interacts with SPATA13 (via N-terminus and SH3 domain). Interacts with ASAP1 (via SH3 domain). Interacts (at the cell membrane) with AMER1 and AMER2 (via ARM repeats). Interacts with KHDRBS1. Interacts with actin; binds both to F-actin and actin filament bundles. In terms of processing, phosphorylated; phosphorylation enhances the F-actin bundling activity. Phosphorylated by GSK3B. Ubiquitinated, leading to its degradation by the proteasome. Ubiquitination is facilitated by Axin. Deubiquitinated by ZRANB1/TRABID. In terms of tissue distribution, expressed in a variety of tissues: brain, small intestine, colon, thymus, skeletal muscle, heart, prostate, lung, spleen, ovary, testis kidney, placenta, blood and liver. Isoform 1A: Very strongly expressed in brain but has relatively low expression levels in other tissues. Isoform 1B: Predominant form in all tissues except for brain, including gastric mucosa and blood.

It is found in the cell junction. Its subcellular location is the adherens junction. The protein resides in the cytoplasm. The protein localises to the cytoskeleton. It localises to the cell projection. It is found in the lamellipodium. Its subcellular location is the ruffle membrane. The protein resides in the cell membrane. Functionally, tumor suppressor. Promotes rapid degradation of CTNNB1 and participates in Wnt signaling as a negative regulator. APC activity is correlated with its phosphorylation state. Activates the GEF activity of SPATA13 and ARHGEF4. Plays a role in hepatocyte growth factor (HGF)-induced cell migration. Required for MMP9 up-regulation via the JNK signaling pathway in colorectal tumor cells. Associates with both microtubules and actin filaments, components of the cytoskeleton. Plays a role in mediating the organization of F-actin into ordered bundles. Functions downstream of Rho GTPases and DIAPH1 to selectively stabilize microtubules. Acts as a mediator of ERBB2-dependent stabilization of microtubules at the cell cortex. It is required for the localization of MACF1 to the cell membrane and this localization of MACF1 is critical for its function in microtubule stabilization. This is Adenomatous polyposis coli protein from Homo sapiens (Human).